Consider the following 356-residue polypeptide: Nicotinate-nucleotide--dimethylbenzimidazole phosphoribosyltransferase (356 aa).

Glutamate 317 serves as the catalytic Proton acceptor.

This sequence belongs to the CobT family. As to quaternary structure, homodimer.

It catalyses the reaction 5,6-dimethylbenzimidazole + nicotinate beta-D-ribonucleotide = alpha-ribazole 5'-phosphate + nicotinate + H(+). The protein operates within nucleoside biosynthesis; alpha-ribazole biosynthesis; alpha-ribazole from 5,6-dimethylbenzimidazole: step 1/2. Catalyzes the synthesis of alpha-ribazole-5'-phosphate from nicotinate mononucleotide (NAMN) and 5,6-dimethylbenzimidazole (DMB). The protein is Nicotinate-nucleotide--dimethylbenzimidazole phosphoribosyltransferase of Salmonella dublin (strain CT_02021853).